Here is a 47-residue protein sequence, read N- to C-terminus: Delta-stichotoxin-Hcr3a (47 aa).

At Pro3 the chain carries Hydroxyproline. 3 disulfides stabilise this stretch: Cys4–Cys44, Cys6–Cys34, and Cys27–Cys45.

This sequence belongs to the sea anemone sodium channel inhibitory toxin family. Type I subfamily.

It localises to the secreted. The protein resides in the nematocyst. Inhibits voltage-gated sodium channels (Nav). The chain is Delta-stichotoxin-Hcr3a from Radianthus crispa (Leathery sea anemone).